The chain runs to 511 residues: GMP synthase [glutamine-hydrolyzing] (511 aa).

The Glutamine amidotransferase type-1 domain occupies K3 to D193. C80 functions as the Nucleophile in the catalytic mechanism. Active-site residues include H167 and E169. The 191-residue stretch at W194 to R384 folds into the GMPS ATP-PPase domain. S221–L227 provides a ligand contact to ATP.

As to quaternary structure, homodimer.

The enzyme catalyses XMP + L-glutamine + ATP + H2O = GMP + L-glutamate + AMP + diphosphate + 2 H(+). The protein operates within purine metabolism; GMP biosynthesis; GMP from XMP (L-Gln route): step 1/1. Its function is as follows. Catalyzes the synthesis of GMP from XMP. In Malacoplasma penetrans (strain HF-2) (Mycoplasma penetrans), this protein is GMP synthase [glutamine-hydrolyzing].